The following is a 92-amino-acid chain: Sugar fermentation stimulation protein B (92 aa).

The segment at residues 50-69 is a DNA-binding region (H-T-H motif); that stretch reads EMIIAKALGTDPWVIWPSRY.

Belongs to the ner transcriptional regulatory family.

Functionally, this protein is involved in positive regulation of the metabolism of sugars. The sequence is that of Sugar fermentation stimulation protein B (sfsB) from Escherichia coli O157:H7.